A 529-amino-acid polypeptide reads, in one-letter code: MTLSPYLQEVAKRRTFAIISHPDAGKTTITEKVLLFGQAIQTAGTVKGRGSSQHAKSDWMEMEKQRGISITTSVMQFPYHDCLVNLLDTPGHEDFSEDTYRTLTAVDCCLMVIDAAKGVEDRTRKLMEVTRLRDTPILTFMNKLDRDIRDPMELLDEVENELKIGCAPITWPIGCGKLFKGVYHLYKDETYLYQTGKGHTIQEVRIVKGLNNPDLDAAVGEDLAQQLRDELELVQGASNEFDEELFLAGEITPVFFGTALGNFGVDHMLDGLVAWAPAPMPRQTDTRTVEASEEKFTGFVFKIQANMDPKHRDRVAFMRVVSGKYEKGMKLRQVRTGKDVVISDALTFMAGDRSHVEEAYPGDILGLHNHGTIQIGDTFTQGEMMKFTGIPNFAPELFRRIRLKDPLKQKQLLKGLVQLSEEGAVQVFRPISNNDLIVGAVGVLQFDVVVARLKSEYNVEAIYESVNVATARWVESADAKKFEEFKRKNETQLALDGGDNLTYIAPTMVNLNLTQERYPDVQFRKTREH.

The tr-type G domain maps to 11–280; it reads AKRRTFAIIS…GLVAWAPAPM (270 aa). GTP-binding positions include 20-27, 88-92, and 142-145; these read SHPDAGKT, DTPGH, and NKLD.

Belongs to the TRAFAC class translation factor GTPase superfamily. Classic translation factor GTPase family. PrfC subfamily.

Its subcellular location is the cytoplasm. Functionally, increases the formation of ribosomal termination complexes and stimulates activities of RF-1 and RF-2. It binds guanine nucleotides and has strong preference for UGA stop codons. It may interact directly with the ribosome. The stimulation of RF-1 and RF-2 is significantly reduced by GTP and GDP, but not by GMP. This Salmonella agona (strain SL483) protein is Peptide chain release factor 3.